We begin with the raw amino-acid sequence, 120 residues long: Large ribosomal subunit protein bL20c (120 aa).

The protein belongs to the bacterial ribosomal protein bL20 family.

It localises to the plastid. Binds directly to 23S ribosomal RNA and is necessary for the in vitro assembly process of the 50S ribosomal subunit. It is not involved in the protein synthesizing functions of that subunit. The sequence is that of Large ribosomal subunit protein bL20c (rpl20) from Cuscuta gronovii (Common dodder).